Here is a 391-residue protein sequence, read N- to C-terminus: FLUCTUATING-LIGHT-ACCLIMATION protein 1, chloroplastic (391 aa).

The transit peptide at 1-48 (MASSSTFLELTPFQWNQPLPYTQRPHHRTVLLYSKPQRRSNSIRLQIS) directs the protein to the chloroplast. Residues 87 to 107 (AIAAVLLGLLLFYDPNSALAA) form a helical membrane-spanning segment. The span at 116–138 (SFSSRSRSSSSSSSQSYSVPRTS) shows a compositional bias: low complexity. The tract at residues 116–140 (SFSSRSRSSSSSSSQSYSVPRTSNP) is disordered. A run of 2 helical transmembrane segments spans residues 168-188 (FGFG…AFVL) and 321-341 (YIVV…PING).

The protein belongs to the FLAP family.

Its subcellular location is the plastid. It is found in the chloroplast thylakoid membrane. The protein localises to the chloroplast membrane. The protein resides in the chloroplast envelope. Functionally, monitors proton H(+) homeostasis in chloroplasts to manipulate luminal acidification levels appropriately to balance photoprotection and photochemical processes. Required during acclimation response to fluctuating light (e.g. photosynthetic activity optimization) by controlling non-photochemical quenching (NPQ); acts independently from DLDG1. The chain is FLUCTUATING-LIGHT-ACCLIMATION protein 1, chloroplastic from Arabidopsis thaliana (Mouse-ear cress).